A 314-amino-acid polypeptide reads, in one-letter code: Small ribosomal subunit protein uS2 (314 aa).

2 stretches are compositionally biased toward basic and acidic residues: residues 244-265 (GGHD…GHKD) and 271-287 (DRRG…EDRA). A disordered region spans residues 244–314 (GGHDERREQE…AAPEAAPAKE (71 aa)). Positions 302–314 (APAAAPEAAPAKE) are enriched in low complexity.

This sequence belongs to the universal ribosomal protein uS2 family.

This is Small ribosomal subunit protein uS2 from Anaeromyxobacter dehalogenans (strain 2CP-C).